The sequence spans 187 residues: Ion-translocating oxidoreductase complex subunit B (187 aa).

Residues Met1–Ala26 form a hydrophobic region. The region spanning Glu32–Val90 is the 4Fe-4S domain. The [4Fe-4S] cluster site is built by Cys49, Cys52, Cys57, Cys73, Cys115, Cys118, Cys121, Cys125, Cys145, Cys148, Cys151, and Cys155. 2 4Fe-4S ferredoxin-type domains span residues Lys106–Lys135 and Ala136–Val165.

It belongs to the 4Fe4S bacterial-type ferredoxin family. RnfB subfamily. The complex is composed of six subunits: RnfA, RnfB, RnfC, RnfD, RnfE and RnfG. [4Fe-4S] cluster serves as cofactor.

The protein localises to the cell inner membrane. Functionally, part of a membrane-bound complex that couples electron transfer with translocation of ions across the membrane. This Aeromonas hydrophila subsp. hydrophila (strain ATCC 7966 / DSM 30187 / BCRC 13018 / CCUG 14551 / JCM 1027 / KCTC 2358 / NCIMB 9240 / NCTC 8049) protein is Ion-translocating oxidoreductase complex subunit B.